Reading from the N-terminus, the 229-residue chain is ABC transporter I family member 1 (229 aa).

The ABC transporter domain occupies 11–228 (LLLQNVSCMR…LIDMLDRADI (218 aa)). An ATP-binding site is contributed by 43-50 (GTNGSGKS).

Belongs to the ABC transporter superfamily. ABCI family.

The protein localises to the membrane. It carries out the reaction heme b(in) + ATP + H2O = heme b(out) + ADP + phosphate + H(+). Part of the ABC transporter complex CcmAB involved in the biogenesis of c-type cytochromes; once thought to export heme, this seems not to be the case, but its exact role is uncertain. Responsible for energy coupling to the transport system. This Arabidopsis thaliana (Mouse-ear cress) protein is ABC transporter I family member 1 (ABCI1).